Reading from the N-terminus, the 251-residue chain is Zinc import ATP-binding protein ZnuC (251 aa).

The ABC transporter domain occupies 5 to 220 (VSLENVSVSF…PEFISMFGPR (216 aa)). Residue 37 to 44 (GPNGAGKS) participates in ATP binding.

The protein belongs to the ABC transporter superfamily. Zinc importer (TC 3.A.1.15.5) family. As to quaternary structure, the complex is composed of two ATP-binding proteins (ZnuC), two transmembrane proteins (ZnuB) and a solute-binding protein (ZnuA).

The protein localises to the cell inner membrane. It catalyses the reaction Zn(2+)(out) + ATP(in) + H2O(in) = Zn(2+)(in) + ADP(in) + phosphate(in) + H(+)(in). Part of the ABC transporter complex ZnuABC involved in zinc import. Responsible for energy coupling to the transport system. The chain is Zinc import ATP-binding protein ZnuC from Escherichia coli O157:H7.